The chain runs to 263 residues: MARGPKKHLKRVAAPKHWMLDKLTGVFAPRPSTGPHKLRECLPLIIFLRNRLKYALTGDEVKKICMQRFIKIDGKVRTDITYPTGFMDVVSIEKTGENFRLIYDVKGRFTVHRITNEEAKYKLCKVRKILIGTKGIPHLVTHDARTIRYPDPLIKVNDTIRIDLDTGKITDFIKFETGNMCMVTGGANLGRIGVITNREKHPGSFDVVHVKDSIGNSFATRLSNIFVIGKGNKPWVSLPRGKGVRLTIAEERDKRLAAKQSSS.

Positions 42–105 (LPLIIFLRNR…GENFRLIYDV (64 aa)) constitute an S4 RNA-binding domain.

The protein belongs to the eukaryotic ribosomal protein eS4 family. In terms of assembly, component of the small ribosomal subunit. Part of the small subunit (SSU) processome, composed of more than 70 proteins and the RNA chaperone small nucleolar RNA (snoRNA) U3.

It localises to the cytoplasm. It is found in the nucleus. The protein resides in the nucleolus. In terms of biological role, component of the small ribosomal subunit. The ribosome is a large ribonucleoprotein complex responsible for the synthesis of proteins in the cell. Part of the small subunit (SSU) processome, first precursor of the small eukaryotic ribosomal subunit. During the assembly of the SSU processome in the nucleolus, many ribosome biogenesis factors, an RNA chaperone and ribosomal proteins associate with the nascent pre-rRNA and work in concert to generate RNA folding, modifications, rearrangements and cleavage as well as targeted degradation of pre-ribosomal RNA by the RNA exosome. This Danio rerio (Zebrafish) protein is Small ribosomal subunit protein eS4 (rps4x).